A 509-amino-acid chain; its full sequence is Cobyric acid synthase (509 aa).

The 198-residue stretch at 262-459 (EIKVGIIKLP…IHGIFENDIW (198 aa)) folds into the GATase cobBQ-type domain. C343 serves as the catalytic Nucleophile. H451 is a catalytic residue.

The protein belongs to the CobB/CobQ family. CobQ subfamily.

The protein operates within cofactor biosynthesis; adenosylcobalamin biosynthesis. In terms of biological role, catalyzes amidations at positions B, D, E, and G on adenosylcobyrinic A,C-diamide. NH(2) groups are provided by glutamine, and one molecule of ATP is hydrogenolyzed for each amidation. The protein is Cobyric acid synthase of Prochlorococcus marinus (strain MIT 9312).